Here is an 88-residue protein sequence, read N- to C-terminus: Small ribosomal subunit protein bS20 (88 aa).

Disordered stretches follow at residues 1 to 23 (MANS…HNAA) and 69 to 88 (PNKA…AMAA). The span at 69–81 (PNKAARHKSRLNT) shows a compositional bias: basic residues.

This sequence belongs to the bacterial ribosomal protein bS20 family.

Binds directly to 16S ribosomal RNA. The polypeptide is Small ribosomal subunit protein bS20 (Alcanivorax borkumensis (strain ATCC 700651 / DSM 11573 / NCIMB 13689 / SK2)).